Here is a 629-residue protein sequence, read N- to C-terminus: tRNA uridine 5-carboxymethylaminomethyl modification enzyme MnmG (629 aa).

Residues 13–18 (GGGHAG), valine 125, and serine 180 each bind FAD. 273-287 (GPRYCPSIEDKVMRF) contributes to the NAD(+) binding site. Glutamine 370 serves as a coordination point for FAD.

This sequence belongs to the MnmG family. In terms of assembly, homodimer. Heterotetramer of two MnmE and two MnmG subunits. It depends on FAD as a cofactor.

It localises to the cytoplasm. In terms of biological role, NAD-binding protein involved in the addition of a carboxymethylaminomethyl (cmnm) group at the wobble position (U34) of certain tRNAs, forming tRNA-cmnm(5)s(2)U34. In Escherichia coli O157:H7, this protein is tRNA uridine 5-carboxymethylaminomethyl modification enzyme MnmG.